Reading from the N-terminus, the 268-residue chain is MTGINTHFAVALFCFFSFSLRAMSQASQMLIDCTQFDNVTRTSSYLSNRDTVLSTLRNRSSIGSYSNATAGLSPNTIYGMFLCRGDLNRTSCSDCVNATTLEIYKSCFYRKSALVISNECIVRYSNVSFFTLVEDVPSTARFSTGNSLDSPQFFSQTLLEKLDALILRASLSSSLPVPYFVDDQQHVTQLEGSYDLHAMVQCSPDLDPRNCTVCLRLAVQRLSGCCSHAQFARIFYTKCLITYEISALQPNVTSLGVTKSESLTVYII.

Positions 1–24 (MTGINTHFAVALFCFFSFSLRAMS) are cleaved as a signal peptide. Gnk2-homologous domains follow at residues 27–129 (SQML…NVSF) and 135–248 (DVPS…ISAL).

Belongs to the cysteine-rich repeat secretory protein family.

It is found in the secreted. The chain is Putative cysteine-rich repeat secretory protein 5 (CRRSP5) from Arabidopsis thaliana (Mouse-ear cress).